We begin with the raw amino-acid sequence, 405 residues long: Cytoplasmic tRNA 2-thiolation protein 2 (405 aa).

Belongs to the CTU2/NCS2 family.

Its subcellular location is the cytoplasm. It participates in tRNA modification; 5-methoxycarbonylmethyl-2-thiouridine-tRNA biosynthesis. Plays a central role in 2-thiolation of mcm(5)S(2)U at tRNA wobble positions of tRNA(Lys), tRNA(Glu) and tRNA(Gln). May act by forming a heterodimer with NCS6/CTU1 that ligates sulfur from thiocarboxylated URM1 onto the uridine of tRNAs at wobble position. The sequence is that of Cytoplasmic tRNA 2-thiolation protein 2 from Drosophila pseudoobscura pseudoobscura (Fruit fly).